Reading from the N-terminus, the 126-residue chain is MPHFIVECSDNIREEADLPGLFAKVNPTLAATGIFPLAGIRSRVHWVDTWQMADGQHDYASVHMTLKIGAGRSLESRQQAGEMLFELIKTHFAALMESRLLALSFEIEELHPTLNFKQNNVHALFK.

P2 (proton acceptor; via imino nitrogen) is an active-site residue.

Homotrimer.

It catalyses the reaction (2E,4Z)-5-hydroxypenta-2,4-diene-1,2,5-tricarboxylate = (3E,5R)-5-carboxy-2-oxohept-3-enedioate. The protein operates within aromatic compound metabolism; 4-hydroxyphenylacetate degradation; pyruvate and succinate semialdehyde from 4-hydroxyphenylacetate: step 4/7. Functionally, transforms 5-carboxymethyl-2-hydroxy-muconic acid (CHM) into 5-oxo-pent-3-ene-1,2,5-tricarboxylic acid (OPET). This is 5-carboxymethyl-2-hydroxymuconate Delta-isomerase (hpcD) from Escherichia coli.